A 278-amino-acid chain; its full sequence is Inositol oxygenase (278 aa).

Residues Arg22 and Asp78–Ser80 each bind substrate. Residues His91, His116, and Asp117 each contribute to the Fe cation site. Substrate is bound by residues Lys120 and Gly134–Asp135. 3 residues coordinate Fe cation: His187, His213, and Asp246. Residue His213–Ser214 coordinates substrate.

This sequence belongs to the myo-inositol oxygenase family. The cofactor is Fe cation.

It is found in the cytoplasm. The enzyme catalyses myo-inositol + O2 = D-glucuronate + H2O + H(+). It functions in the pathway polyol metabolism; myo-inositol degradation into D-glucuronate; D-glucuronate from myo-inositol: step 1/1. This is Inositol oxygenase (miox) from Danio rerio (Zebrafish).